Reading from the N-terminus, the 276-residue chain is Exosome complex component RRP43 (276 aa).

Ala2 carries the post-translational modification N-acetylalanine.

Belongs to the RNase PH family. Component of the RNA exosome core complex (Exo-9), composed of EXOSC1, EXOSC2, EXOSC3, EXOSC4, EXOSC5, EXOSC6, EXOSC7, EXOSC8 and EXOSC9; within the complex interacts with EXOSC5 and EXOSC6. The catalytically inactive RNA exosome core complex (Exo-9) associates with the catalytic subunit EXOSC10/RRP6. Exo-9 may associate with DIS3 to form the nucleolar exosome complex, or DIS3L to form the cytoplasmic exosome complex. Exo-9 is formed by a hexameric base ring consisting of the heterodimers EXOSC4-EXOSC9, EXOSC5-EXOSC8 and EXOSC6-EXOSC7, and a cap ring consisting of EXOSC1, EXOSC2 and EXOSC3. The RNA exosome complex associates with cofactors C1D/RRP47, MPHOSPH6/MPP6 and MTREX/MTR4.

It is found in the cytoplasm. Its subcellular location is the nucleus. The protein resides in the nucleolus. Functionally, non-catalytic component of the RNA exosome complex which has 3'-&gt;5' exoribonuclease activity and participates in a multitude of cellular RNA processing and degradation events. In the nucleus, the RNA exosome complex is involved in proper maturation of stable RNA species such as rRNA, snRNA and snoRNA, in the elimination of RNA processing by-products and non-coding 'pervasive' transcripts, such as antisense RNA species and promoter-upstream transcripts (PROMPTs), and of mRNAs with processing defects, thereby limiting or excluding their export to the cytoplasm. The RNA exosome may be involved in Ig class switch recombination (CSR) and/or Ig variable region somatic hypermutation (SHM) by targeting AICDA deamination activity to transcribed dsDNA substrates. In the cytoplasm, the RNA exosome complex is involved in general mRNA turnover and specifically degrades inherently unstable mRNAs containing AU-rich elements (AREs) within their 3' untranslated regions, and in RNA surveillance pathways, preventing translation of aberrant mRNAs. It seems to be involved in degradation of histone mRNA. The catalytic inactive RNA exosome core complex of 9 subunits (Exo-9) is proposed to play a pivotal role in the binding and presentation of RNA for ribonucleolysis, and to serve as a scaffold for the association with catalytic subunits and accessory proteins or complexes. EXOSC8 binds to ARE-containing RNAs. The chain is Exosome complex component RRP43 (Exosc8) from Mus musculus (Mouse).